A 162-amino-acid polypeptide reads, in one-letter code: Transcriptional regulator MraZ (162 aa).

2 SpoVT-AbrB domains span residues 11–62 (EHPS…GLSV) and 98–141 (AVEC…SRDT).

It belongs to the MraZ family. As to quaternary structure, forms oligomers.

The protein resides in the cytoplasm. It localises to the nucleoid. In Pelobacter propionicus (strain DSM 2379 / NBRC 103807 / OttBd1), this protein is Transcriptional regulator MraZ.